The following is a 199-amino-acid chain: Chaperone protein TorD (199 aa).

The protein belongs to the TorD/DmsD family. TorD subfamily.

It localises to the cytoplasm. In terms of biological role, involved in the biogenesis of TorA. Acts on TorA before the insertion of the molybdenum cofactor and, as a result, probably favors a conformation of the apoenzyme that is competent for acquiring the cofactor. The sequence is that of Chaperone protein TorD from Shigella dysenteriae serotype 1 (strain Sd197).